The chain runs to 1004 residues: Sodium/potassium-transporting ATPase subunit alpha-B (1004 aa).

The next 2 helical transmembrane spans lie at 76–96 (LFGG…LAYG) and 110–126 (NLYL…VTGI). Residues 197 to 216 (SSLTGESEPQARSPEFTNDN) form a disordered region. The next 2 helical transmembrane spans lie at 272-294 (FIHI…AFVL) and 301-329 (AVVF…TLTA). D357 acts as the 4-aspartylphosphate intermediate in catalysis. K489 is an ATP binding site. 2 residues coordinate Mg(2+): D698 and D702. 4 helical membrane passes run 768–791 (ISPF…ILCI), 828–855 (ERLI…VIMA), 897–918 (SSCH…LIIS), and 934–959 (ILNF…DKGL).

The protein belongs to the cation transport ATPase (P-type) (TC 3.A.3) family. Type IIC subfamily. In terms of assembly, the sodium/potassium-transporting ATPase is composed of a catalytic alpha subunit, an auxiliary non-catalytic beta subunit and an additional regulatory subunit.

Its subcellular location is the cell membrane. It carries out the reaction K(+)(out) + Na(+)(in) + ATP + H2O = K(+)(in) + Na(+)(out) + ADP + phosphate + H(+). Its function is as follows. This is the catalytic component of the active enzyme, which catalyzes the hydrolysis of ATP coupled with the exchange of sodium and potassium ions across the plasma membrane. This action creates the electrochemical gradient of sodium and potassium ions, providing the energy for active transport of various nutrients. The sequence is that of Sodium/potassium-transporting ATPase subunit alpha-B from Artemia franciscana (Brine shrimp).